We begin with the raw amino-acid sequence, 43 residues long: Cytochrome b559 subunit beta (43 aa).

A helical transmembrane segment spans residues 18–34 (WLAVHTLAVPSVFFLGA). A heme-binding site is contributed by His-22.

Belongs to the PsbE/PsbF family. As to quaternary structure, heterodimer of an alpha subunit and a beta subunit. PSII is composed of 1 copy each of membrane proteins PsbA, PsbB, PsbC, PsbD, PsbE, PsbF, PsbH, PsbI, PsbJ, PsbK, PsbL, PsbM, PsbT, PsbX, PsbY, PsbZ, Psb30/Ycf12, peripheral proteins PsbO, CyanoQ (PsbQ), PsbU, PsbV and a large number of cofactors. It forms dimeric complexes. Requires heme b as cofactor.

It is found in the cellular thylakoid membrane. In terms of biological role, this b-type cytochrome is tightly associated with the reaction center of photosystem II (PSII). PSII is a light-driven water:plastoquinone oxidoreductase that uses light energy to abstract electrons from H(2)O, generating O(2) and a proton gradient subsequently used for ATP formation. It consists of a core antenna complex that captures photons, and an electron transfer chain that converts photonic excitation into a charge separation. This Picosynechococcus sp. (strain ATCC 27264 / PCC 7002 / PR-6) (Agmenellum quadruplicatum) protein is Cytochrome b559 subunit beta.